The primary structure comprises 471 residues: UDP-N-acetylmuramate--L-alanine ligase (471 aa).

ATP is bound at residue 114–120 (GTHGKTT).

The protein belongs to the MurCDEF family.

The protein resides in the cytoplasm. The enzyme catalyses UDP-N-acetyl-alpha-D-muramate + L-alanine + ATP = UDP-N-acetyl-alpha-D-muramoyl-L-alanine + ADP + phosphate + H(+). It functions in the pathway cell wall biogenesis; peptidoglycan biosynthesis. In terms of biological role, cell wall formation. The protein is UDP-N-acetylmuramate--L-alanine ligase of Rhizobium etli (strain ATCC 51251 / DSM 11541 / JCM 21823 / NBRC 15573 / CFN 42).